The following is a 534-amino-acid chain: Beta-glucosidase 32 (534 aa).

The N-terminal stretch at 1 to 22 (MAIKLIALVITICVASWDSAQG) is a signal peptide. Position 51 (Q51) interacts with a beta-D-glucoside. N68 carries an N-linked (GlcNAc...) asparagine glycan. A beta-D-glucoside is bound by residues H154 and 199 to 200 (NE). E200 acts as the Proton donor in catalysis. A disulfide bond links C219 and C227. Position 344 (Y344) interacts with a beta-D-glucoside. N374 carries N-linked (GlcNAc...) asparagine glycosylation. An a beta-D-glucoside-binding site is contributed by E417. Catalysis depends on E417, which acts as the Nucleophile. N425 is a glycosylation site (N-linked (GlcNAc...) asparagine). Residues W467, 474-475 (EW), and F483 contribute to the a beta-D-glucoside site.

This sequence belongs to the glycosyl hydrolase 1 family.

It carries out the reaction Hydrolysis of terminal, non-reducing beta-D-glucosyl residues with release of beta-D-glucose.. The chain is Beta-glucosidase 32 from Arabidopsis thaliana (Mouse-ear cress).